We begin with the raw amino-acid sequence, 280 residues long: MSALVLDGKALAAKTEQELSQRVTALKARNGQTPILATILVGDDPASATYVKMKGNACTRIGMESIKVELPSSTTTEELLAKIQELNDNPNVHGILLQHPVPHQIDERLCFDAIAPEKDVDGVTCLGFGRMAMGEEAYGCATPKGIMRLLEAYNIEIAGKHAVVVGRSPILGKPMAMMLLNANATVTICHSRTRNLPDLIKQADIIVGAVGKPEFIKAEWIKDGAVVVDAGYHPGGVGDIELGPLVERAAAYTPVPGGVGPMTINTLIYQSVDSGEKKIR.

NADP(+)-binding positions include 166-168 and serine 191; that span reads GRS.

It belongs to the tetrahydrofolate dehydrogenase/cyclohydrolase family. Homodimer.

It carries out the reaction (6R)-5,10-methylene-5,6,7,8-tetrahydrofolate + NADP(+) = (6R)-5,10-methenyltetrahydrofolate + NADPH. The enzyme catalyses (6R)-5,10-methenyltetrahydrofolate + H2O = (6R)-10-formyltetrahydrofolate + H(+). Its pathway is one-carbon metabolism; tetrahydrofolate interconversion. In terms of biological role, catalyzes the oxidation of 5,10-methylenetetrahydrofolate to 5,10-methenyltetrahydrofolate and then the hydrolysis of 5,10-methenyltetrahydrofolate to 10-formyltetrahydrofolate. The sequence is that of Bifunctional protein FolD from Cellvibrio japonicus (strain Ueda107) (Pseudomonas fluorescens subsp. cellulosa).